A 217-amino-acid polypeptide reads, in one-letter code: Nascent polypeptide-associated complex subunit alpha (217 aa).

Residues 1-45 are disordered; it reads MPELTEIKSEAAPSTSAEAKPEDVRVEDDGSDSDSDGGMPGLEEA. Basic and acidic residues predominate over residues 19 to 28; sequence AKPEDVRVED. In terms of domain architecture, NAC-A/B spans 70–135; that stretch reads SRGEKKARKI…AKIEDLSQQA (66 aa). The segment at 154-177 is disordered; that stretch reads SVGATTSVAPIAEEDEEDVDDTGV. Residues 165-176 are compositionally biased toward acidic residues; the sequence is AEEDEEDVDDTG. Positions 177–217 constitute a UBA domain; the sequence is VDEKDIELVITQANTTRAKAIKALKNNNNDIVNAIMELTML.

This sequence belongs to the NAC-alpha family. Part of the nascent polypeptide-associated complex (NAC), consisting of Nac-alpha and bicaudal (bic).

May promote appropriate targeting of ribosome-nascent polypeptide complexes. Required for correct localization of the osk/oskar protein to the posterior pole during embryonic development. The osk protein directs the recruitment of molecules responsible for posterior body patterning and germline formation in the embryo. The chain is Nascent polypeptide-associated complex subunit alpha (Nacalpha) from Drosophila melanogaster (Fruit fly).